A 457-amino-acid chain; its full sequence is Succinate-semialdehyde dehydrogenase [NADP(+)] 1 (457 aa).

209–214 lines the NADP(+) pocket; the sequence is GSEPAG. Residues Glu-231 and Cys-265 contribute to the active site.

It belongs to the aldehyde dehydrogenase family.

The catalysed reaction is succinate semialdehyde + NAD(+) + H2O = succinate + NADH + 2 H(+). It catalyses the reaction succinate semialdehyde + NADP(+) + H2O = succinate + NADPH + 2 H(+). Functionally, catalyzes the NADP(+)-dependent oxidation of succinate semialdehyde to succinate. It is believed to be the main source of succinate semialdehyde dehydrogenase activity in Mycobacterium. The polypeptide is Succinate-semialdehyde dehydrogenase [NADP(+)] 1 (gabD1) (Mycobacterium bovis (strain ATCC BAA-935 / AF2122/97)).